The following is a 126-amino-acid chain: MPTINQLIRKPRSRLIVKSKSPALENSPQRRGVCTRVYTTTPKKPNSALRKVAKVRLTNGFEVISYIGGEGHNLQEHSVVLIRGGRVKDLPGVRYHIVRGSLDLQGVKDRKQSRSKYGAKRAKKAA.

Asp-89 carries the 3-methylthioaspartic acid modification.

Belongs to the universal ribosomal protein uS12 family. Part of the 30S ribosomal subunit. Contacts proteins S8 and S17. May interact with IF1 in the 30S initiation complex.

In terms of biological role, with S4 and S5 plays an important role in translational accuracy. Its function is as follows. Interacts with and stabilizes bases of the 16S rRNA that are involved in tRNA selection in the A site and with the mRNA backbone. Located at the interface of the 30S and 50S subunits, it traverses the body of the 30S subunit contacting proteins on the other side and probably holding the rRNA structure together. The combined cluster of proteins S8, S12 and S17 appears to hold together the shoulder and platform of the 30S subunit. The protein is Small ribosomal subunit protein uS12 of Polynucleobacter asymbioticus (strain DSM 18221 / CIP 109841 / QLW-P1DMWA-1) (Polynucleobacter necessarius subsp. asymbioticus).